Consider the following 419-residue polypeptide: MHTINSDLRNTDPDISFLINQELLRQQTHLELIASENFASEAVMEAQGSVLTNKYAEGLPNKRYYGGCEHIDAIEQLAITRAQTLFNAEWANVQPHSGAQANFAVFLALLNPGDTIMGMDLSHGGHLTHGSPVNVSGKWFNAIHYGVDQTTKVLNFEQIRQVALKNRPKLIICGFSAYPRTIDFKAFRSIADEIDAYLLADIAHIAGLVACGAHPNPVPYCDVVTTTTHKTLRGPRGGLILCRDKEFGKRFDKAVFPGNQGGPLEHVIAAKAVAFGEALKPEFKTYTFQVISNAKALAKRIQERGISIVSEGTDNHIVLLDLRSIEMTGKKADSLISEVNITANKNTVPFDPESPFVTSGLRLGTAALTTRGFTEKAFIEVADVIADCLLNPEDLSIKEQCKAKVIDLCNRFPLYNSNQ.

Residues Leu121 and 125–127 (GHL) each bind (6S)-5,6,7,8-tetrahydrofolate. Lys230 bears the N6-(pyridoxal phosphate)lysine mark. Position 354-356 (354-356 (SPF)) interacts with (6S)-5,6,7,8-tetrahydrofolate.

The protein belongs to the SHMT family. Homodimer. Pyridoxal 5'-phosphate serves as cofactor.

The protein localises to the cytoplasm. The catalysed reaction is (6R)-5,10-methylene-5,6,7,8-tetrahydrofolate + glycine + H2O = (6S)-5,6,7,8-tetrahydrofolate + L-serine. The protein operates within one-carbon metabolism; tetrahydrofolate interconversion. Its pathway is amino-acid biosynthesis; glycine biosynthesis; glycine from L-serine: step 1/1. Its function is as follows. Catalyzes the reversible interconversion of serine and glycine with tetrahydrofolate (THF) serving as the one-carbon carrier. This reaction serves as the major source of one-carbon groups required for the biosynthesis of purines, thymidylate, methionine, and other important biomolecules. Also exhibits THF-independent aldolase activity toward beta-hydroxyamino acids, producing glycine and aldehydes, via a retro-aldol mechanism. In Prochlorococcus marinus (strain SARG / CCMP1375 / SS120), this protein is Serine hydroxymethyltransferase.